The primary structure comprises 403 residues: Phosphopentomutase (403 aa).

Mn(2+) contacts are provided by aspartate 13, aspartate 298, histidine 303, aspartate 339, histidine 340, and histidine 351.

It belongs to the phosphopentomutase family. Mn(2+) is required as a cofactor.

The protein resides in the cytoplasm. It catalyses the reaction 2-deoxy-alpha-D-ribose 1-phosphate = 2-deoxy-D-ribose 5-phosphate. The catalysed reaction is alpha-D-ribose 1-phosphate = D-ribose 5-phosphate. Its pathway is carbohydrate degradation; 2-deoxy-D-ribose 1-phosphate degradation; D-glyceraldehyde 3-phosphate and acetaldehyde from 2-deoxy-alpha-D-ribose 1-phosphate: step 1/2. Its function is as follows. Isomerase that catalyzes the conversion of deoxy-ribose 1-phosphate (dRib-1-P) and ribose 1-phosphate (Rib-1-P) to deoxy-ribose 5-phosphate (dRib-5-P) and ribose 5-phosphate (Rib-5-P), respectively. This chain is Phosphopentomutase, found in Streptococcus thermophilus.